Consider the following 343-residue polypeptide: Transcription factor MYB11 (343 aa).

2 HTH myb-type domains span residues 9–61 (KVGI…INYL) and 62–116 (RSDI…SRKL). 2 consecutive DNA-binding regions (H-T-H motif) follow at residues 37 to 61 (WRSL…INYL) and 89 to 112 (WSTI…NSHL). The interval 126–146 (ANTVENAPPPPKRRPGRTSRS) is disordered.

In terms of tissue distribution, expressed in seedlings, roots, cotyledons, leaves and apical meristems.

The protein localises to the nucleus. Its function is as follows. Modulates overall growth by reducing the proliferation activity of meristematic cells and delaying development. Flavonol-specific transcription activator involved in the regulation of several genes of flavonoid biosynthesis. Activates the expression of CHS, CHI, F3H and FLS1. Confers tolerance to UV-B. The chain is Transcription factor MYB11 from Arabidopsis thaliana (Mouse-ear cress).